The following is a 364-amino-acid chain: UDP-N-acetylglucosamine--N-acetylmuramyl-(pentapeptide) pyrophosphoryl-undecaprenol N-acetylglucosamine transferase (364 aa).

Residues 10 to 12 (TGG), Asn124, Arg165, Ser193, Ile248, and Gln293 each bind UDP-N-acetyl-alpha-D-glucosamine.

This sequence belongs to the glycosyltransferase 28 family. MurG subfamily.

The protein localises to the cell inner membrane. It catalyses the reaction di-trans,octa-cis-undecaprenyl diphospho-N-acetyl-alpha-D-muramoyl-L-alanyl-D-glutamyl-meso-2,6-diaminopimeloyl-D-alanyl-D-alanine + UDP-N-acetyl-alpha-D-glucosamine = di-trans,octa-cis-undecaprenyl diphospho-[N-acetyl-alpha-D-glucosaminyl-(1-&gt;4)]-N-acetyl-alpha-D-muramoyl-L-alanyl-D-glutamyl-meso-2,6-diaminopimeloyl-D-alanyl-D-alanine + UDP + H(+). It functions in the pathway cell wall biogenesis; peptidoglycan biosynthesis. In terms of biological role, cell wall formation. Catalyzes the transfer of a GlcNAc subunit on undecaprenyl-pyrophosphoryl-MurNAc-pentapeptide (lipid intermediate I) to form undecaprenyl-pyrophosphoryl-MurNAc-(pentapeptide)GlcNAc (lipid intermediate II). The polypeptide is UDP-N-acetylglucosamine--N-acetylmuramyl-(pentapeptide) pyrophosphoryl-undecaprenol N-acetylglucosamine transferase (Geobacter metallireducens (strain ATCC 53774 / DSM 7210 / GS-15)).